A 278-amino-acid chain; its full sequence is E3 ubiquitin-protein ligase CHIP (278 aa).

TPR repeat units follow at residues 10–43 (AERL…SPNV), 45–77 (AYWT…VHNS), and 78–111 (VKAH…GRCS). Residues 143-194 (ELNSLKETCEAALNQQRALDMSRTEESSDEAYTAHTERLKALERVFKKAAEE) are a coiled coil. The 75-residue stretch at 199-273 (EVPDYLCCNI…AAYLEKHVWA (75 aa)) folds into the U-box domain.

Interacts with HSC70-4, PP2AA1, PP2AA3 and PP2A5, as well as with UBC8, UBC9 and UBC10. Also interacts with the chloroplastic proteolytic subunits ClpP4, FtsH1 and FtsH2.

The catalysed reaction is S-ubiquitinyl-[E2 ubiquitin-conjugating enzyme]-L-cysteine + [acceptor protein]-L-lysine = [E2 ubiquitin-conjugating enzyme]-L-cysteine + N(6)-ubiquitinyl-[acceptor protein]-L-lysine.. The protein operates within protein modification; protein ubiquitination. In terms of biological role, has E3 ubiquitin-protein ligase activity and may target misfolded substrates towards proteasomal degradation. Regulates the activity of some serine/threonine-protein phosphatases by E3 ubiquitin-protein ligase activity. Required for responses to biotic and abiotic stresses such as auxin, abscisic acid (ABA), low and high temperature and darkness, probably through the activation of serine/threonine-protein phosphatase and the subsequent modification of the plasma membrane composition. Regulates the chloroplastic Clp proteolytic activity in response to stresses. Ubiquitylates FtsH1, a component of the chloroplast FtsH protease, and affects protein degradation in chloroplasts. Mediates plastid precursor degradation to prevent cytosolic precursor accumulation, together with the molecular chaperone HSC70-4. Mediates ubiquitination of transit peptides and thereby led to their degradation through the ubiquitin-proteasome system. This Arabidopsis thaliana (Mouse-ear cress) protein is E3 ubiquitin-protein ligase CHIP.